A 237-amino-acid chain; its full sequence is H/ACA ribonucleoprotein complex subunit 1 (237 aa).

2 stretches are compositionally biased toward gly residues: residues 1 to 59 and 172 to 237; these read MGFG…GGRG and RGGG…RGRW. Disordered regions lie at residues 1 to 64 and 157 to 237; these read MGFG…FDTG and KPPQ…RGRW. 2 RGG-box regions span residues 4–56 and 166–236; these read GKPR…GRGG and KAFT…GRGR.

The protein belongs to the GAR1 family. In terms of assembly, component of the box H/ACA small nucleolar ribonucleoprotein (H/ACA snoRNP) complex consisting of Nop60B, Gar1, NPH2 and Nop10, and associated with H/ACA-type snoRNAs.

Its subcellular location is the nucleus. The protein localises to the nucleolus. In terms of biological role, component of the box H/ACA small nucleolar ribonucleoprotein (H/ACA snoRNP) complex, which catalyzes pseudouridylation of rRNA. This involves the isomerization of uridine such that the ribose is subsequently attached to C5, instead of the normal N1. Pseudouridine ('psi') residues may serve to stabilize the conformation of rRNAs. Required for ribosome biogenesis. H/ACA snoRNP complex-dependent ribosome biogenesis is important in female germline cell differentiation during oogenesis. The sequence is that of H/ACA ribonucleoprotein complex subunit 1 from Drosophila melanogaster (Fruit fly).